The chain runs to 392 residues: Homeobox protein engrailed-1 (392 aa).

Disordered stretches follow at residues 1 to 100, 132 to 164, 219 to 251, and 282 to 306; these read MEEQ…AQLH, ARGGAGGGGRVERDRGQTAAGRDPVHPLGTRAP, KPSDTGGGGSGGGAGSPGAQGTKYPEHGNPAIL, and SDRPSSGPRTRKLKKKKNEKEDKRP. Positions 14–36 are enriched in low complexity; it reads SALGAAAAATPGGLSLSLSPGAS. Pro residues-rich tracts occupy residues 51–66 and 75–84; these read SPQPAPPSPPAAPCLP and PPHPPPPPPQ. Low complexity predominate over residues 85-100; sequence HLAAPAHQPQPAAQLH. Positions 223–236 are enriched in gly residues; the sequence is TGGGGSGGGAGSPG. Positions 303 to 362 form a DNA-binding region, homeobox; that stretch reads DKRPRTAFTAEQLQRLKAEFQANRYITEQRRQTLAQELSLNESQIKIWFQNKRAKIKKAT.

It belongs to the engrailed homeobox family.

The protein resides in the nucleus. Its function is as follows. Required for proper formation of the apical ectodermal ridge and correct dorsal-ventral patterning in the limb. The protein is Homeobox protein engrailed-1 (EN1) of Homo sapiens (Human).